Here is a 356-residue protein sequence, read N- to C-terminus: MRVADFSFELPEALIAHYPQPQRSGCRLLSLDGPTGTLTHGIFTDLLDKLAPGDLLVFNNTRVIPARLFGRKASGGKLEVLVERVLDDHRVLAHVKASKAPKPGAELLLGDDESIRATMLARHDTLFELCFDDERDVFTILNAVGHMPLPPYIDRPDEDADRELYQTVYSQRPGAVAAPTAGLHFDEPMLAALQEKGIEMAFVTLHVGAGTFQPVRVDTIEDHIMHSEYAEVPQEVVDAVLACKARGKRVVAVGTTSVRSLESAAKAAENGLIAPFFGDTRIFIYPGYHYQVVDALVTNFHLPESTLIMLVSAFAGYKNTMNAYQQAVAEQYRFFSYGDAMFISRNPRAPQEKVSP.

Belongs to the QueA family. Monomer.

It is found in the cytoplasm. It carries out the reaction 7-aminomethyl-7-carbaguanosine(34) in tRNA + S-adenosyl-L-methionine = epoxyqueuosine(34) in tRNA + adenine + L-methionine + 2 H(+). Its pathway is tRNA modification; tRNA-queuosine biosynthesis. Functionally, transfers and isomerizes the ribose moiety from AdoMet to the 7-aminomethyl group of 7-deazaguanine (preQ1-tRNA) to give epoxyqueuosine (oQ-tRNA). The polypeptide is S-adenosylmethionine:tRNA ribosyltransferase-isomerase (Yersinia pseudotuberculosis serotype IB (strain PB1/+)).